A 131-amino-acid chain; its full sequence is Fluoride-specific ion channel FluC (131 aa).

Transmembrane regions (helical) follow at residues 4 to 24 (LWIM…TGFV), 30 to 50 (GIFP…IGFF), 68 to 88 (LFVM…SLQT), and 104 to 124 (IALS…VAVA). Positions 76 and 79 each coordinate Na(+).

The protein belongs to the fluoride channel Fluc/FEX (TC 1.A.43) family.

Its subcellular location is the cell inner membrane. The enzyme catalyses fluoride(in) = fluoride(out). Na(+) is not transported, but it plays an essential structural role and its presence is essential for fluoride channel function. Functionally, fluoride-specific ion channel. Important for reducing fluoride concentration in the cell, thus reducing its toxicity. In Methylocella silvestris (strain DSM 15510 / CIP 108128 / LMG 27833 / NCIMB 13906 / BL2), this protein is Fluoride-specific ion channel FluC.